We begin with the raw amino-acid sequence, 309 residues long: Porphobilinogen deaminase (309 aa).

Cys241 carries the post-translational modification S-(dipyrrolylmethanemethyl)cysteine.

This sequence belongs to the HMBS family. In terms of assembly, monomer. It depends on dipyrromethane as a cofactor.

The catalysed reaction is 4 porphobilinogen + H2O = hydroxymethylbilane + 4 NH4(+). It participates in porphyrin-containing compound metabolism; protoporphyrin-IX biosynthesis; coproporphyrinogen-III from 5-aminolevulinate: step 2/4. Its function is as follows. Tetrapolymerization of the monopyrrole PBG into the hydroxymethylbilane pre-uroporphyrinogen in several discrete steps. In Bacillus thuringiensis subsp. konkukian (strain 97-27), this protein is Porphobilinogen deaminase.